The following is a 244-amino-acid chain: Protein crossbronx (244 aa).

Positions 20 to 176 (QQEYKILAEY…VQENIKESKE (157 aa)) constitute a UBC core domain. A disordered region spans residues 209–244 (AGRSKQTEPSAQQGNGGHATGLSWVKEGEFKPLSIE).

The protein belongs to the ubiquitin-conjugating enzyme family. FTS subfamily.

The sequence is that of Protein crossbronx (cbx) from Drosophila sechellia (Fruit fly).